A 154-amino-acid polypeptide reads, in one-letter code: Large ribosomal subunit protein uL13 (154 aa).

This sequence belongs to the universal ribosomal protein uL13 family. As to quaternary structure, part of the 50S ribosomal subunit.

This protein is one of the early assembly proteins of the 50S ribosomal subunit, although it is not seen to bind rRNA by itself. It is important during the early stages of 50S assembly. This chain is Large ribosomal subunit protein uL13, found in Rhizobium leguminosarum bv. trifolii (strain WSM2304).